A 367-amino-acid chain; its full sequence is UDP-N-acetylglucosamine--N-acetylmuramyl-(pentapeptide) pyrophosphoryl-undecaprenol N-acetylglucosamine transferase (367 aa).

Residues 15-17 (TGG), asparagine 127, arginine 163, serine 191, isoleucine 249, and glutamine 294 contribute to the UDP-N-acetyl-alpha-D-glucosamine site.

Belongs to the glycosyltransferase 28 family. MurG subfamily.

The protein resides in the cell inner membrane. The catalysed reaction is di-trans,octa-cis-undecaprenyl diphospho-N-acetyl-alpha-D-muramoyl-L-alanyl-D-glutamyl-meso-2,6-diaminopimeloyl-D-alanyl-D-alanine + UDP-N-acetyl-alpha-D-glucosamine = di-trans,octa-cis-undecaprenyl diphospho-[N-acetyl-alpha-D-glucosaminyl-(1-&gt;4)]-N-acetyl-alpha-D-muramoyl-L-alanyl-D-glutamyl-meso-2,6-diaminopimeloyl-D-alanyl-D-alanine + UDP + H(+). Its pathway is cell wall biogenesis; peptidoglycan biosynthesis. Functionally, cell wall formation. Catalyzes the transfer of a GlcNAc subunit on undecaprenyl-pyrophosphoryl-MurNAc-pentapeptide (lipid intermediate I) to form undecaprenyl-pyrophosphoryl-MurNAc-(pentapeptide)GlcNAc (lipid intermediate II). The polypeptide is UDP-N-acetylglucosamine--N-acetylmuramyl-(pentapeptide) pyrophosphoryl-undecaprenol N-acetylglucosamine transferase (Burkholderia cenocepacia (strain HI2424)).